Here is a 165-residue protein sequence, read N- to C-terminus: Small ribosomal subunit protein bS16 (165 aa).

The tract at residues 84–165 (WTHGNNPEKG…EAPAEEAAEG (82 aa)) is disordered. Positions 89-130 (NPEKGKPGKKAQERLAERAQREEERKQAEADAKAAAEAEKAA) are enriched in basic and acidic residues. Positions 131–157 (AAEAAAAAAAAPAVEEAPAEEAPAAEA) are enriched in low complexity.

This sequence belongs to the bacterial ribosomal protein bS16 family.

The protein is Small ribosomal subunit protein bS16 of Caulobacter vibrioides (strain ATCC 19089 / CIP 103742 / CB 15) (Caulobacter crescentus).